Consider the following 262-residue polypeptide: Hydroxyethylthiazole kinase (262 aa).

Met-50 is a binding site for substrate. ATP is bound by residues Arg-125 and Thr-171. Residue Gly-198 participates in substrate binding.

It belongs to the Thz kinase family. Mg(2+) is required as a cofactor.

The catalysed reaction is 5-(2-hydroxyethyl)-4-methylthiazole + ATP = 4-methyl-5-(2-phosphooxyethyl)-thiazole + ADP + H(+). Its pathway is cofactor biosynthesis; thiamine diphosphate biosynthesis; 4-methyl-5-(2-phosphoethyl)-thiazole from 5-(2-hydroxyethyl)-4-methylthiazole: step 1/1. Its function is as follows. Catalyzes the phosphorylation of the hydroxyl group of 4-methyl-5-beta-hydroxyethylthiazole (THZ). This chain is Hydroxyethylthiazole kinase, found in Escherichia coli O81 (strain ED1a).